A 443-amino-acid chain; its full sequence is Nuclear hormone receptor family member nhr-60 (443 aa).

Residues 1 to 20 (MIQSSSSISQDSLDLPSILS) show a composition bias toward low complexity. Positions 1 to 40 (MIQSSSSISQDSLDLPSILSTFSADEPEDEPSPTAVKSTK) are disordered. The nuclear receptor DNA-binding region spans 44–121 (PTECLICGNS…VGMNPLAMEV (78 aa)). 2 consecutive NR C4-type zinc fingers follow at residues 47–67 (CLICGNSANGHHYDVASCNGC) and 83–104 (CKAKGDCFDLTKRKVPLKCRAC). Positions 196-439 (NEFSGLEYLL…KDLVMRVIED (244 aa)) constitute an NR LBD domain. Residues 225–249 (LRRDQLGPPRLPKPPSPGKPRDSQH) are disordered. Residues 233–242 (PRLPKPPSPG) show a composition bias toward pro residues.

The protein belongs to the nuclear hormone receptor family.

It is found in the nucleus. In terms of biological role, orphan nuclear receptor (Potential). Required for embryonic and larval morphogenesis and probably for seam cell positioning and migration. In Caenorhabditis elegans, this protein is Nuclear hormone receptor family member nhr-60.